The chain runs to 506 residues: Cytochrome P450 4B1 (506 aa).

Glu310 contacts heme. Ser431 carries the post-translational modification Phosphoserine. Cys448 contacts heme.

It belongs to the cytochrome P450 family. Heme is required as a cofactor.

It is found in the endoplasmic reticulum membrane. Its subcellular location is the microsome membrane. The catalysed reaction is an organic molecule + reduced [NADPH--hemoprotein reductase] + O2 = an alcohol + oxidized [NADPH--hemoprotein reductase] + H2O + H(+). Cytochromes P450 are a group of heme-thiolate monooxygenases. In liver microsomes, this enzyme is involved in an NADPH-dependent electron transport pathway. It oxidizes a variety of structurally unrelated compounds, including steroids, fatty acids, and xenobiotics. This chain is Cytochrome P450 4B1 (CYP4B1), found in Oryctolagus cuniculus (Rabbit).